A 63-amino-acid polypeptide reads, in one-letter code: Antimicrobial peptide 2 (63 aa).

The N-terminal stretch at 1 to 27 (MAKVPIAFLKFVIVLILFIAMSGMIEA) is a signal peptide. 3 cysteine pairs are disulfide-bonded: Cys28-Cys45, Cys35-Cys49, and Cys44-Cys60.

The protein belongs to the AMP family. Homodimer. As to expression, seed specific.

It is found in the secreted. Possesses antifungal activity and is also active on two tested Gram-positive bacteria but is non-toxic for Gram-negative bacteria and cultured human cells. This Mirabilis jalapa (Garden four-o'clock) protein is Antimicrobial peptide 2 (AMP2).